Here is a 1231-residue protein sequence, read N- to C-terminus: Cohesin subunit SA-2 (1231 aa).

An N-acetylmethionine modification is found at Met1. The tract at residues 1–75 is disordered; sequence MIAAPEIPTD…GPNRMNGHHQ (75 aa). Residues 36–48 show a composition bias toward basic residues; the sequence is KQGKGKTCKKGKK. An SCD domain is found at 293–378; sequence FVHRYRDAIA…SRFKDRIVSM (86 aa). An N6-acetyllysine modification is found at Lys607. Phosphoserine is present on residues Ser1058, Ser1061, Ser1064, and Ser1065. The disordered stretch occupies residues 1064-1083; the sequence is SSRGSTVRSKKSKPSTGKRK. Over residues 1071-1082 the composition is skewed to basic residues; sequence RSKKSKPSTGKR. Thr1112 carries the post-translational modification Phosphothreonine. Phosphoserine occurs at positions 1177 and 1178.

It belongs to the SCC3 family. In terms of assembly, interacts directly with RAD21 in cohesin complex. Cohesin complexes are composed of a heterodimer between a SMC1 protein (SMC1A or SMC1B) and SMC3, which are attached via their hinge domain, and RAD21 which link them at their heads, and one STAG protein (STAG1, STAG2 or STAG3). In cohesin complexes, STAG2 is mutually exclusive with STAG1 and STAG3. Post-translationally, phosphorylated by PLK1. The large dissociation of cohesin from chromosome arms during prophase is partly due to its phosphorylation.

The protein resides in the nucleus. It is found in the chromosome. The protein localises to the centromere. Functionally, component of cohesin complex, a complex required for the cohesion of sister chromatids after DNA replication. The cohesin complex apparently forms a large proteinaceous ring within which sister chromatids can be trapped. At anaphase, the complex is cleaved and dissociates from chromatin, allowing sister chromatids to segregate. The cohesin complex may also play a role in spindle pole assembly during mitosis. In Homo sapiens (Human), this protein is Cohesin subunit SA-2 (STAG2).